A 610-amino-acid polypeptide reads, in one-letter code: Glutamine--fructose-6-phosphate aminotransferase [isomerizing] (610 aa).

C2 (nucleophile; for GATase activity) is an active-site residue. The region spanning 2–221 (CGIVGAVAQR…DGDVVDLQLA (220 aa)) is the Glutamine amidotransferase type-2 domain. SIS domains lie at 286–426 (AYKV…TRGR) and 459–600 (WADR…VDKP). The active-site For Fru-6P isomerization activity is K605.

In terms of assembly, homodimer.

Its subcellular location is the cytoplasm. The catalysed reaction is D-fructose 6-phosphate + L-glutamine = D-glucosamine 6-phosphate + L-glutamate. In terms of biological role, catalyzes the first step in hexosamine metabolism, converting fructose-6P into glucosamine-6P using glutamine as a nitrogen source. This chain is Glutamine--fructose-6-phosphate aminotransferase [isomerizing], found in Bordetella bronchiseptica (strain ATCC BAA-588 / NCTC 13252 / RB50) (Alcaligenes bronchisepticus).